The sequence spans 137 residues: Nucleoside diphosphate kinase (137 aa).

Positions 9, 57, 85, 91, 102, and 112 each coordinate ATP. His-115 functions as the Pros-phosphohistidine intermediate in the catalytic mechanism.

This sequence belongs to the NDK family. In terms of assembly, homotetramer. It depends on Mg(2+) as a cofactor.

The protein localises to the cytoplasm. It catalyses the reaction a 2'-deoxyribonucleoside 5'-diphosphate + ATP = a 2'-deoxyribonucleoside 5'-triphosphate + ADP. It carries out the reaction a ribonucleoside 5'-diphosphate + ATP = a ribonucleoside 5'-triphosphate + ADP. Functionally, major role in the synthesis of nucleoside triphosphates other than ATP. The ATP gamma phosphate is transferred to the NDP beta phosphate via a ping-pong mechanism, using a phosphorylated active-site intermediate. In Leptospira biflexa serovar Patoc (strain Patoc 1 / ATCC 23582 / Paris), this protein is Nucleoside diphosphate kinase.